Consider the following 354-residue polypeptide: Rhodopsin (354 aa).

At 1 to 36 the chain is on the extracellular side; that stretch reads MNGTEGPNFYIPMSNKTGVVRSPFEYPQYYLAEPWQ. 2 N-linked (GlcNAc...) asparagine glycosylation sites follow: Asn-2 and Asn-15. The helical transmembrane segment at 37-61 threads the bilayer; the sequence is YSILCAYMFLLILLGFPINFMTLYV. Over 62–73 the chain is Cytoplasmic; sequence TIQHKKLRTPLN. A helical membrane pass occupies residues 74–96; the sequence is YILLNLAFANHFMVLCGFTVTMY. Residues 97–110 are Extracellular-facing; sequence SSMNGYFILGATGC. Cys-110 and Cys-187 form a disulfide bridge. A helical transmembrane segment spans residues 111 to 133; the sequence is YVEGFFATLGGEIALWSLVVLAI. The 'Ionic lock' involved in activated form stabilization signature appears at 134–136; the sequence is ERY. At 134–152 the chain is on the cytoplasmic side; that stretch reads ERYVVVCKPMSNFRFSENH. A helical membrane pass occupies residues 153-173; it reads AVMGVAFTWIMALSCAVPPLL. At 174–202 the chain is on the extracellular side; that stretch reads GWSRYIPEGMQCSCGVDYYTLKPEVNNES. Residues 203–224 traverse the membrane as a helical segment; sequence FVIYMFVVHFTIPLIIIFFCYG. The Cytoplasmic segment spans residues 225-252; that stretch reads RLVCTVKEAAAQQQESATTQKAEKEVTR. A helical membrane pass occupies residues 253–274; it reads MVIIMVVFFLICWVPYASVAFF. Residues 275–286 are Extracellular-facing; sequence IFSNQGSEFGPI. Residues 287-308 traverse the membrane as a helical segment; sequence FMTVPAFFAKSSSIYNPVIYIM. Lys-296 carries the N6-(retinylidene)lysine modification. The Cytoplasmic segment spans residues 309-354; sequence LNKQFRNCMITTLCCGKNPFGEDDASSAATSKTEASSVSSSQVSPA. 2 S-palmitoyl cysteine lipidation sites follow: Cys-322 and Cys-323. The segment at 331–354 is disordered; sequence DDASSAATSKTEASSVSSSQVSPA. Residues 334–354 show a composition bias toward low complexity; sequence SSAATSKTEASSVSSSQVSPA.

The protein belongs to the G-protein coupled receptor 1 family. Opsin subfamily. In terms of processing, contains one covalently linked retinal chromophore. Upon light absorption, the covalently bound 11-cis-retinal is converted to all-trans-retinal. After hydrolysis of the Schiff base and release of the covalently bound all-trans-retinal, active rhodopsin is regenerated by binding of a fresh molecule of 11-cis-retinal.

The protein localises to the membrane. It localises to the cell projection. The protein resides in the cilium. It is found in the photoreceptor outer segment. Photoreceptor required for image-forming vision at low light intensity. Required for photoreceptor cell viability after birth. Light-induced isomerization of 11-cis to all-trans retinal triggers a conformational change that activates signaling via G-proteins. Subsequent receptor phosphorylation mediates displacement of the bound G-protein alpha subunit by arrestin and terminates signaling. This Bufo bufo (European toad) protein is Rhodopsin (RHO).